Here is a 456-residue protein sequence, read N- to C-terminus: Chitin synthase regulatory factor 1 (456 aa).

3 disordered regions span residues 1–20, 38–74, and 139–158; these read MPASTSIPETPSKLPDALLV, ESPLALEGSPLPTVSDVLPETNNAHEEVSSSSWSLSS, and SKPSLSSNSSDSSFSKSGSE. The span at 140–158 shows a compositional bias: low complexity; that stretch reads KPSLSSNSSDSSFSKSGSE. Ser-227 and Ser-230 each carry phosphoserine. 4 Sel1-like repeats span residues 293-327, 328-364, 365-402, and 403-438; these read NFVPYELAELYKQRGTSQDLKSILPLYMLAASLGH, DRSSFLVGEAFFYGTYGARENKLRALQYYHLANDKGN, ADAMLALCKLYLRGLPGHIFPSSRRAFEYAHRAAMLGH, and APACYVLGKFYETGVGCVKDLAKSEAGFRAGLINDS.

In terms of biological role, involved in chitin biosynthesis. The sequence is that of Chitin synthase regulatory factor 1 (chr1) from Schizosaccharomyces pombe (strain 972 / ATCC 24843) (Fission yeast).